The chain runs to 509 residues: ATP synthase subunit alpha (509 aa).

169–176 serves as a coordination point for ATP; sequence GDRQTGKT.

This sequence belongs to the ATPase alpha/beta chains family. F-type ATPases have 2 components, CF(1) - the catalytic core - and CF(0) - the membrane proton channel. CF(1) has five subunits: alpha(3), beta(3), gamma(1), delta(1), epsilon(1). CF(0) has three main subunits: a(1), b(2) and c(9-12). The alpha and beta chains form an alternating ring which encloses part of the gamma chain. CF(1) is attached to CF(0) by a central stalk formed by the gamma and epsilon chains, while a peripheral stalk is formed by the delta and b chains.

The protein localises to the cell inner membrane. It catalyses the reaction ATP + H2O + 4 H(+)(in) = ADP + phosphate + 5 H(+)(out). Its function is as follows. Produces ATP from ADP in the presence of a proton gradient across the membrane. The alpha chain is a regulatory subunit. This chain is ATP synthase subunit alpha, found in Brucella ovis (strain ATCC 25840 / 63/290 / NCTC 10512).